Reading from the N-terminus, the 205-residue chain is Probable GTP-binding protein EngB (205 aa).

In terms of domain architecture, EngB-type G spans 27–201 (SGIEIAFAGR…AAKLDSWFAP (175 aa)). GTP contacts are provided by residues 35 to 42 (GRSNAGKS), 62 to 66 (GRTQL), 80 to 83 (DLPG), 147 to 150 (TKAD), and 180 to 182 (FSA). Positions 42 and 64 each coordinate Mg(2+).

The protein belongs to the TRAFAC class TrmE-Era-EngA-EngB-Septin-like GTPase superfamily. EngB GTPase family. Mg(2+) is required as a cofactor.

Necessary for normal cell division and for the maintenance of normal septation. This Pasteurella multocida (strain Pm70) protein is Probable GTP-binding protein EngB.